The primary structure comprises 503 residues: uncharacterized protein (503 aa).

Basic and acidic residues-rich tracts occupy residues 1-23 and 203-215; these read MAHE…EKVR and PLEK…RSDQ. 2 disordered regions span residues 1–29 and 149–227; these read MAHE…TVPV and ETFQ…SNSS. Phosphoserine occurs at positions 239 and 243. 2 disordered regions span residues 346–370 and 450–475; these read LDPA…GAKW and LLSS…GAPK. Residues 347–356 are compositionally biased toward basic and acidic residues; sequence DPARLPRPDM.

This is an uncharacterized protein from Bos taurus (Bovine).